Consider the following 411-residue polypeptide: tRNA (guanine(37)-N(1))-methyltransferase (411 aa).

S-adenosyl-L-methionine contacts are provided by residues His-216, 254–255, 282–283, and Asn-303; these read DL and DG. The interval 391 to 411 is disordered; the sequence is ERQASKQDDPKRRKVAAENAA.

Belongs to the class I-like SAM-binding methyltransferase superfamily. TRM5/TYW2 family. As to quaternary structure, monomer.

The protein localises to the mitochondrion matrix. The protein resides in the nucleus. It is found in the cytoplasm. The catalysed reaction is guanosine(37) in tRNA + S-adenosyl-L-methionine = N(1)-methylguanosine(37) in tRNA + S-adenosyl-L-homocysteine + H(+). In terms of biological role, specifically methylates the N1 position of guanosine-37 in various cytoplasmic and mitochondrial tRNAs. Methylation is not dependent on the nature of the nucleoside 5' of the target nucleoside. This is the first step in the biosynthesis of wybutosine (yW), a modified base adjacent to the anticodon of tRNAs and required for accurate decoding. This is tRNA (guanine(37)-N(1))-methyltransferase from Phytophthora infestans (strain T30-4) (Potato late blight agent).